Reading from the N-terminus, the 355-residue chain is uncharacterized protein (355 aa).

This sequence belongs to the 3-beta-HSD family.

This is an uncharacterized protein from Frog virus 3 (isolate Goorha) (FV-3).